The following is a 257-amino-acid chain: Diaminopimelate epimerase (257 aa).

Residues Asn-6 and Asn-57 each contribute to the substrate site. The active-site Proton donor is Cys-66. Residues 67 to 68, Asn-170, and 188 to 189 contribute to the substrate site; these read GN and ER. Cys-198 (proton acceptor) is an active-site residue. 199 to 200 provides a ligand contact to substrate; that stretch reads GT.

The protein belongs to the diaminopimelate epimerase family. Homodimer.

It is found in the cytoplasm. It catalyses the reaction (2S,6S)-2,6-diaminopimelate = meso-2,6-diaminopimelate. It participates in amino-acid biosynthesis; L-lysine biosynthesis via DAP pathway; DL-2,6-diaminopimelate from LL-2,6-diaminopimelate: step 1/1. Catalyzes the stereoinversion of LL-2,6-diaminopimelate (L,L-DAP) to meso-diaminopimelate (meso-DAP), a precursor of L-lysine and an essential component of the bacterial peptidoglycan. The protein is Diaminopimelate epimerase of Chlorobaculum tepidum (strain ATCC 49652 / DSM 12025 / NBRC 103806 / TLS) (Chlorobium tepidum).